Reading from the N-terminus, the 460-residue chain is Telomere-binding protein homolog (460 aa).

This sequence belongs to the telombin family.

The protein resides in the nucleus. The protein localises to the chromosome. It localises to the telomere. In terms of biological role, may bind telomeric T4G4 sequences. This chain is Telomere-binding protein homolog, found in Euplotes crassus.